We begin with the raw amino-acid sequence, 396 residues long: Stearoyl-[acyl-carrier-protein] 9-desaturase, chloroplastic (396 aa).

The transit peptide at 1 to 33 (MALRITPVTLQSERYRSFSFPKKANLRSPKFAM) directs the protein to the chloroplast. Ala34 bears the Blocked amino end (Ala); partial mark. Glu138, Glu176, His179, Glu229, Glu262, and His265 together coordinate Fe cation.

The protein belongs to the fatty acid desaturase type 2 family. As to quaternary structure, homodimer. The cofactor is Fe(2+). In terms of processing, most of the N-terminus is blocked.

It localises to the plastid. The protein resides in the chloroplast. The enzyme catalyses octadecanoyl-[ACP] + 2 reduced [2Fe-2S]-[ferredoxin] + O2 + 2 H(+) = (9Z)-octadecenoyl-[ACP] + 2 oxidized [2Fe-2S]-[ferredoxin] + 2 H2O. It functions in the pathway lipid metabolism; fatty acid metabolism. Converts stearoyl-ACP to oleoyl-ACP by introduction of a cis double bond between carbons 9 and 10 of the acyl chain. The sequence is that of Stearoyl-[acyl-carrier-protein] 9-desaturase, chloroplastic from Carthamus tinctorius (Safflower).